A 247-amino-acid polypeptide reads, in one-letter code: 3-deoxy-manno-octulosonate cytidylyltransferase (247 aa).

This sequence belongs to the KdsB family.

Its subcellular location is the cytoplasm. It carries out the reaction 3-deoxy-alpha-D-manno-oct-2-ulosonate + CTP = CMP-3-deoxy-beta-D-manno-octulosonate + diphosphate. It participates in nucleotide-sugar biosynthesis; CMP-3-deoxy-D-manno-octulosonate biosynthesis; CMP-3-deoxy-D-manno-octulosonate from 3-deoxy-D-manno-octulosonate and CTP: step 1/1. Its pathway is bacterial outer membrane biogenesis; lipopolysaccharide biosynthesis. Functionally, activates KDO (a required 8-carbon sugar) for incorporation into bacterial lipopolysaccharide in Gram-negative bacteria. This chain is 3-deoxy-manno-octulosonate cytidylyltransferase, found in Leptospira interrogans serogroup Icterohaemorrhagiae serovar Lai (strain 56601).